We begin with the raw amino-acid sequence, 248 residues long: Putative eukaryotic initiation factor 4A-like protein (248 aa).

The short motif at 14 to 42 (VGFASLGLNEQLINNIKRYGITKLTPFQM) is the Q motif element. One can recognise a Helicase ATP-binding domain in the interval 45-239 (IKEIKENSNV…NTFIKIPKII (195 aa)). Position 58–65 (58–65 (SIEGTGRT)) interacts with ATP. The DEAD box signature appears at 185 to 188 (DELD).

The protein belongs to the DEAD box helicase family. eIF4A subfamily.

The chain is Putative eukaryotic initiation factor 4A-like protein from Dictyostelium discoideum (Social amoeba).